The primary structure comprises 450 residues: Ammonium transporter Rh type A (450 aa).

Topologically, residues 1–4 are cytoplasmic; it reads MRFK. A helical transmembrane segment spans residues 5–25; the sequence is FSLIALSLEVVMIVSFALFVE. At 26-72 the chain is on the extracellular side; that stretch reads YETSQNGSQKSASQQNASQQNAAAQQNASQQGNASSPAKEDQFFQLY. Residues Asn-31, Asn-41, Asn-52, and Asn-58 are each glycosylated (N-linked (GlcNAc...) asparagine). The disordered stretch occupies residues 34 to 61; that stretch reads QKSASQQNASQQNAAAQQNASQQGNASS. A helical transmembrane segment spans residues 73–93; it reads PLFQHVHVMIFVGFGFLMTFL. Residues 94–97 lie on the Cytoplasmic side of the membrane; it reads KKYG. Residues 98–118 traverse the membrane as a helical segment; that stretch reads FSGVGFNLFLAALGLQWGTIV. The Extracellular portion of the chain corresponds to 119 to 134; the sequence is QGLLHSHGLKFPFRIK. A helical transmembrane segment spans residues 135–155; the sequence is NMINADFSTATVLISFGAVLG. The Cytoplasmic portion of the chain corresponds to 156–159; sequence KTSP. A helical membrane pass occupies residues 160–180; it reads IQMIIMTILEIAVFAGNEHLV. At 181–189 the chain is on the extracellular side; sequence TEIFKASDT. Residues 190 to 210 traverse the membrane as a helical segment; that stretch reads GASMTIHAFGAYFGLAVAGVL. Residues 211–229 lie on the Cytoplasmic side of the membrane; sequence YRSGLKHGHPNEESVYHSD. The chain crosses the membrane as a helical span at residues 230 to 250; it reads LFAMIGTLFLWMFWPSFNSAI. Over 251-260 the chain is Extracellular; it reads AQPENNQYRA. The helical transmembrane segment at 261–281 threads the bilayer; sequence IVNTYMSLAACVITAYALSSL. The Cytoplasmic segment spans residues 282-289; it reads VERRGRLD. A helical membrane pass occupies residues 290-307; the sequence is MVHIQNATLAGGVAVGTC. Residues 308–311 are Extracellular-facing; that stretch reads ADME. The helical transmembrane segment at 312-332 threads the bilayer; the sequence is IPLYFAMTIGSIAGIISVLGY. Residues 333 to 349 are Cytoplasmic-facing; the sequence is KFLSPLLAHKLMIHDTC. The chain crosses the membrane as a helical span at residues 350–370; sequence GVHNLHGLPGVFGGLASIVAI. Over 371–384 the chain is Extracellular; the sequence is SWGKSTVSTMAMQA. A helical transmembrane segment spans residues 385–405; sequence TALGSSIGSAIVGGLVTGLIL. The Cytoplasmic portion of the chain corresponds to 406–450; that stretch reads KLPVWNQPPDEYCFDDSVSWKVPKYRELDNYFFQHVTHNHVEHEV.

This sequence belongs to the ammonium transporter (TC 2.A.49) family. Rh subfamily. In terms of assembly, homodimer. Heterotrimer; a RHCE monomer interacts with a RHAG homodimer. Component of the ankyrin-1 complex in the erythrocyte, composed of ANK1, RHCE, RHAG, SLC4A1, EPB42, GYPA, GYPB and AQP1. Interacts with GYPB (via the N-terminal); this interaction bridges the (RHAG)2(RHCE) heterotrimer with the SLC4A1 Band 3 I dimer complexed with GYPA. Glycosylated.

The protein localises to the membrane. It carries out the reaction methylamine(out) = methylamine(in). The enzyme catalyses NH4(+)(in) = NH4(+)(out). It catalyses the reaction CO2(out) = CO2(in). Its function is as follows. Component of the ankyrin-1 complex, a multiprotein complex involved in the stability and shape of the erythrocyte membrane. Heterotrimer with RHCE (RHAG)2(RHCE), that transports ammonium and its related derivative methylammonium, in both neutral and ionic forms, across the erythrocyte membrane. The transport of NH4(+) is electrogenic and masks the NH3 transport. Also, may act as a CO2 channel. Moreover in erythrocyte, regulates RHD membrane expression and is associated with rhesus blood group antigen expression. The chain is Ammonium transporter Rh type A from Rattus norvegicus (Rat).